Reading from the N-terminus, the 1296-residue chain is Histone-lysine N-methyltransferase EHMT1 (1296 aa).

Disordered stretches follow at residues 1-111 and 170-200; these read MAAA…NHVT and PQTP…TDVR. At Ala-2 the chain carries N-acetylalanine. Basic and acidic residues predominate over residues 14-31; it reads QETKQDCCMKTELLREDT. Lys-23 participates in a covalent cross-link: Glycyl lysine isopeptide (Lys-Gly) (interchain with G-Cter in SUMO1); alternate. Lys-23 is covalently cross-linked (Glycyl lysine isopeptide (Lys-Gly) (interchain with G-Cter in SUMO2); alternate). Over residues 77–89 the composition is skewed to polar residues; that stretch reads NTRASPQEGTNRV. Residues 97-106 are compositionally biased toward basic and acidic residues; it reads VSERDTEVGK. Glycyl lysine isopeptide (Lys-Gly) (interchain with G-Cter in SUMO2) cross-links involve residues Lys-191, Lys-229, Lys-232, Lys-315, and Lys-325. The segment at 341 to 470 is disordered; that stretch reads SLEMDSEDED…SSPGSMEQAA (130 aa). Residues 342-360 are compositionally biased toward acidic residues; sequence LEMDSEDEDSDELEDDEDH. A compositionally biased stretch (basic and acidic residues) spans 371-391; sequence EDSRTSKESMSETDRAAKMDG. The span at 392–414 shows a compositional bias: acidic residues; that stretch reads DSEEEQESPDTGEDEDGGDESDL. A Glycyl lysine isopeptide (Lys-Gly) (interchain with G-Cter in SUMO2) cross-link involves residue Lys-430. Ser-433 is modified (phosphoserine). Over residues 438–450 the composition is skewed to basic residues; sequence PARKRRRRSRKKP. The residue at position 481 (Ser-481) is a Phosphoserine. Residues Lys-559, Lys-644, Lys-659, and Lys-729 each participate in a glycyl lysine isopeptide (Lys-Gly) (interchain with G-Cter in SUMO2) cross-link. The tract at residues 653 to 714 is disordered; that stretch reads LAPGQEKSLA…PTSGLSQGPG (62 aa). ANK repeat units follow at residues 735–764, 770–799, 803–832, 836–866, 870–899, 903–932, 936–965, and 969–1002; these read FHPK…DPNF, SKRS…NIDT, DQRT…QVDP, EGST…DVNC, GGWT…DINI, EENI…DLHA, HGDS…DVTL, and EGET…DKPV. Residues 903–905 are histone H3K9me binding; the sequence is EEN. Residue Ser-1046 is modified to Phosphoserine. One can recognise a Pre-SET domain in the interval 1058–1121; it reads QYCVCVDDCS…NCRNRVVQNG (64 aa). Zn(2+)-binding residues include Cys-1060, Cys-1062, Cys-1066, Cys-1071, Cys-1073, Cys-1103, Cys-1107, Cys-1109, and Cys-1113. Residues 1124–1241 form the SET domain; that stretch reads ARLQLYRTQD…AGEQLGFDYG (118 aa). Residues 1134–1136, Tyr-1171, and 1198–1199 each bind S-adenosyl-L-methionine; these read MGW and NH. The interval 1160–1179 is interaction with histone H3; it reads DSEADVREEDSYLFDLDNKD. Cys-1201 serves as a coordination point for Zn(2+). The tract at residues 1240 to 1243 is interaction with histone H3; that stretch reads YGER. Residue Cys-1254 participates in Zn(2+) binding. Arg-1255 contacts S-adenosyl-L-methionine. Zn(2+) is bound by residues Cys-1256 and Cys-1261. The interval 1271 to 1296 is disordered; the sequence is RQASAAQEPQENGLPDTSSAAAADPL.

Belongs to the class V-like SAM-binding methyltransferase superfamily. As to quaternary structure, interacts with WIZ. Part of the E2F6.com-1 complex in G0 phase composed of E2F6, MGA, MAX, TFDP1, CBX3, BAT8, EHMT1, RING1, RNF2, MBLR, L3MBTL2 and YAF2. Interacts with MPHOSPH8. Interacts with CDYL. Interacts with REST only in the presence of CDYL. Part of a complex containing at least CDYL, REST, WIZ, SETB1, EHMT1 and EHMT2. Heterodimer; heterodimerizes with EHMT2. Interacts (via ANK repeats) with RELA (when monomethylated at 'Lys-310'). Interacts with Baz2b. Ubiquitous.

It is found in the nucleus. Its subcellular location is the chromosome. The enzyme catalyses N(6)-methyl-L-lysyl(9)-[histone H3] + S-adenosyl-L-methionine = N(6),N(6)-dimethyl-L-lysyl(9)-[histone H3] + S-adenosyl-L-homocysteine + H(+). It catalyses the reaction L-lysyl(9)-[histone H3] + S-adenosyl-L-methionine = N(6)-methyl-L-lysyl(9)-[histone H3] + S-adenosyl-L-homocysteine + H(+). With respect to regulation, methyltransferase activity is inhibited by BIX-01294. Efficiently inhibited by compound E72, a BIX-01294 derivative in which the diazepane ring and the benzyl are replaced with a 3-dimethylaminopropyl and a 5-aminopentyl group at sites B and C, respectively. In terms of biological role, histone methyltransferase that specifically mono- and dimethylates 'Lys-9' of histone H3 (H3K9me1 and H3K9me2, respectively) in euchromatin. H3K9me represents a specific tag for epigenetic transcriptional repression by recruiting HP1 proteins to methylated histones. Also weakly methylates 'Lys-27' of histone H3 (H3K27me). Also required for DNA methylation, the histone methyltransferase activity is not required for DNA methylation, suggesting that these 2 activities function independently. Probably targeted to histone H3 by different DNA-binding proteins like E2F6, MGA, MAX and/or DP1. During G0 phase, it probably contributes to silencing of MYC- and E2F-responsive genes, suggesting a role in G0/G1 transition in cell cycle. In addition to the histone methyltransferase activity, also methylates non-histone proteins: mediates dimethylation of 'Lys-373' of p53/TP53. Represses the expression of mitochondrial function-related genes, perhaps by occupying their promoter regions, working in concert with probable chromatin reader Baz2b. This is Histone-lysine N-methyltransferase EHMT1 (Ehmt1) from Mus musculus (Mouse).